We begin with the raw amino-acid sequence, 483 residues long: Regulatory protein ViaA (483 aa).

It belongs to the ViaA family. In terms of assembly, homodimer. Interacts with RavA.

The protein localises to the cytoplasm. Its function is as follows. Component of the RavA-ViaA chaperone complex, which may act on the membrane to optimize the function of some of the respiratory chains. ViaA stimulates the ATPase activity of RavA. The protein is Regulatory protein ViaA of Salmonella heidelberg (strain SL476).